Here is a 243-residue protein sequence, read N- to C-terminus: Sec-independent protein translocase protein TATB, chloroplastic (243 aa).

Residues 1-67 (MTPTANLLLP…SRTRRRNVIC (67 aa)) constitute a chloroplast transit peptide. Residues 68 to 69 (AS) lie on the Lumenal side of the membrane. Residues 70-90 (LFGVGAPEALVIGVVALLVFG) form a helical membrane-spanning segment. The Stromal portion of the chain corresponds to 91–243 (PKGLAEVARN…NKSQKAEGER (153 aa)). 2 disordered regions span residues 129-165 (EIGI…PAPY) and 178-243 (IAAS…EGER). 2 stretches are compositionally biased toward polar residues: residues 135–152 (VSQS…NQQP) and 187–204 (NPQQ…PTTP).

The protein belongs to the TatB family. In thylakoid membranes, TATC and TATB form a large receptor complex, containing about eight TATC-TATB pairs, which binds the precursor protein. Twin arginine signal peptide promotes pH-triggered docking of TATA oligomers to TATC-TATB receptor complex, inducing a conformational switch of TATA that results in activation of the translocase. TATA dissociates from TATC-TATB upon completion of translocation.

The protein resides in the plastid. Its subcellular location is the chloroplast thylakoid membrane. In terms of biological role, part of the twin-arginine translocation (Tat) system that transports large folded proteins containing a characteristic twin-arginine motif in their signal peptide across the thylakoid membrane. Involved in delta pH-dependent protein transport required for chloroplast development, especially thylakoid membrane formation. TATC and TATB mediate precursor recognition, whereas TATA facilitates translocation. The sequence is that of Sec-independent protein translocase protein TATB, chloroplastic from Zea mays (Maize).